Consider the following 351-residue polypeptide: MATDVQLADYPLMSPKAELKLEKKSGRKPRSPRDSGPQKELVIPGIVDFERIRRALRTPKPQTPGTYCFGRLSHHSFFSRHHPHPQHVTHIQDLTGKPVCVVRDFPAPLPESTVFSGCQMGIPTISVPIGDPQSNRNPQLSSEAWKKELKELASRVAFLTKEDELKKKEKEQKEEPLREQGAKYSAETGRLIPASTRAVGRRRSHQGQQSQSSSRHEGVQAFLLQDQELLVLELLCRILETDLLSAIQFWLLYAPPKEKDLALGLLQTAVAQLLPQPLVSIPTEKLLSQLPEVHEPPQEKQEPPCSQSPKKTKISPFTKSEKPEYIGEAQVLQMHSSQNTEKKTSKPRAES.

Disordered stretches follow at residues 16–40 (KAEL…PQKE), 167–186 (KKEK…KYSA), 195–216 (STRA…SSRH), and 292–351 (EVHE…RAES). The segment covering 167–181 (KKEKEQKEEPLREQG) has biased composition (basic and acidic residues). Basic and acidic residues-rich tracts occupy residues 292–302 (EVHEPPQEKQE) and 340–351 (TEKKTSKPRAES).

This sequence belongs to the TBATA family.

It localises to the cytoplasm. The protein localises to the cytosol. Functionally, may play a role in spermatid differentiation. Modulates thymic stromal cell proliferation and thymus function. The sequence is that of Protein TBATA (TBATA) from Homo sapiens (Human).